Consider the following 143-residue polypeptide: MVAFFSKATKCGNGHLPADLRFGGAVYLKPSIGPSEAVVQRNSMDKLDFQNIDLVSEINKRRKAMATRDETITKKSGEGEEMLPSMGMDHESPSKAHLMVPPAPPPSPADAADINGFSFKIWEAGTSVNSDFNSWKANVSKFH.

The tract at residues 65–111 (MATRDETITKKSGEGEEMLPSMGMDHESPSKAHLMVPPAPPPSPADA) is disordered. The segment covering 66–78 (ATRDETITKKSGE) has biased composition (basic and acidic residues).

The protein is Myocilin opposite strand protein of Mus musculus (Mouse).